The following is an 86-amino-acid chain: Defensin-like protein 97 (86 aa).

Residues 1-27 (MGSLRVSTFAVAVVVCLSILLMSPTDG) form the signal peptide. 4 disulfide bridges follow: cysteine 31–cysteine 74, cysteine 38–cysteine 60, cysteine 44–cysteine 71, and cysteine 48–cysteine 73.

This sequence belongs to the DEFL family.

Its subcellular location is the secreted. This chain is Defensin-like protein 97 (LCR85), found in Arabidopsis thaliana (Mouse-ear cress).